Consider the following 148-residue polypeptide: Arginine repressor (148 aa).

The protein belongs to the ArgR family.

The protein resides in the cytoplasm. It functions in the pathway amino-acid biosynthesis; L-arginine biosynthesis [regulation]. Its function is as follows. Regulates arginine biosynthesis genes. The sequence is that of Arginine repressor from Pelodictyon phaeoclathratiforme (strain DSM 5477 / BU-1).